The following is a 699-amino-acid chain: Elongation factor G (699 aa).

The region spanning 8–283 (EHIRNIGICA…AVVDFLPSPI (276 aa)) is the tr-type G domain. Residues 17 to 24 (AHIDAGKT), 81 to 85 (DTPGH), and 135 to 138 (NKMD) each bind GTP.

This sequence belongs to the TRAFAC class translation factor GTPase superfamily. Classic translation factor GTPase family. EF-G/EF-2 subfamily.

It is found in the cytoplasm. Catalyzes the GTP-dependent ribosomal translocation step during translation elongation. During this step, the ribosome changes from the pre-translocational (PRE) to the post-translocational (POST) state as the newly formed A-site-bound peptidyl-tRNA and P-site-bound deacylated tRNA move to the P and E sites, respectively. Catalyzes the coordinated movement of the two tRNA molecules, the mRNA and conformational changes in the ribosome. This is Elongation factor G from Rickettsia felis (strain ATCC VR-1525 / URRWXCal2) (Rickettsia azadi).